Here is a 200-residue protein sequence, read N- to C-terminus: Phospholipase A2 inhibitor LNF2 (200 aa).

A signal peptide spans 1 to 19; that stretch reads MKSLHTICLLFIFVARGNS. 8 disulfides stabilise this stretch: cysteine 22-cysteine 46, cysteine 25-cysteine 32, cysteine 39-cysteine 67, cysteine 73-cysteine 94, cysteine 95-cysteine 100, cysteine 118-cysteine 143, cysteine 136-cysteine 165, and cysteine 169-cysteine 191. N-linked (GlcNAc...) asparagine glycosylation is present at asparagine 176.

Belongs to the CNF-like-inhibitor family. Occurs as a mixture of oligomers. Tetrameric arrangement appears to be the predominant quaternary structure. In terms of tissue distribution, expressed by the liver.

It is found in the secreted. Functionally, inhibits the enzymatic activity of phospholipase A2 (PA2). In Lachesis muta muta (Bushmaster), this protein is Phospholipase A2 inhibitor LNF2.